A 139-amino-acid chain; its full sequence is Small ribosomal subunit protein bS6 (139 aa).

Residues 114-133 (KKEPREPRAPREPRVEKVDE) show a composition bias toward basic and acidic residues. Positions 114–139 (KKEPREPRAPREPRVEKVDEQTFTEE) are disordered.

Belongs to the bacterial ribosomal protein bS6 family.

Its function is as follows. Binds together with bS18 to 16S ribosomal RNA. The polypeptide is Small ribosomal subunit protein bS6 (Campylobacter concisus (strain 13826)).